The sequence spans 322 residues: Putative membrane-bound redox modulator Alx (322 aa).

Over 1–6 (MNTVGT) the chain is Periplasmic. The helical transmembrane segment at 7 to 27 (PLLWGGFAVVVVIMLSIDLLL) threads the bilayer. Over 28 to 43 (QGRRGAHAMSMKQAAG) the chain is Cytoplasmic. Residues 44–64 (WSILWVTLSLLFNAAFWWYLA) traverse the membrane as a helical segment. Residues 65–89 (ETQGREVADPQALAFLTGYLIEKSL) lie on the Periplasmic side of the membrane. The chain crosses the membrane as a helical span at residues 90–110 (AVDNVFVWLMLFSYFSVPPAL). The Cytoplasmic portion of the chain corresponds to 111–113 (QRR). A helical membrane pass occupies residues 114–134 (VLVYGVLGAIVLRTIMIFAGT). Trp135 is a topological domain (periplasmic). The helical transmembrane segment at 136-156 (LITQFEWLLYVFGAFLLFTGV) threads the bilayer. Residues 157–198 (KMALAKEDESGIGEKPMVRWLRGHLRMTDTIENEHFFVRKNG) lie on the Cytoplasmic side of the membrane. A helical membrane pass occupies residues 199-219 (LLYATPLLLVLIMVEFSDVIF). At 220-225 (AVDSIP) the chain is on the periplasmic side. The helical transmembrane segment at 226 to 246 (AIFAVTTDPFIVLTSNLFAIL) threads the bilayer. The Cytoplasmic portion of the chain corresponds to 247 to 261 (GLRAMYFLLSGVAER). A helical transmembrane segment spans residues 262-282 (FSMLKYGLAVILVFIGIKMLI). At 283–286 (VDFY) the chain is on the periplasmic side. A helical transmembrane segment spans residues 287–307 (HIPIAISLGVVFGILTITLVI). Residues 308–321 (NTWVNHQRDKKLRA) lie on the Cytoplasmic side of the membrane.

The protein belongs to the TerC family.

The protein resides in the cell inner membrane. Its function is as follows. Has been proposed to be a redox modulator. This chain is Putative membrane-bound redox modulator Alx (alx), found in Salmonella typhi.